A 2153-amino-acid polypeptide reads, in one-letter code: Non-reducing polyketide synthase albA (2153 aa).

The tract at residues Tyr-8 to His-244 is N-terminal acylcarrier protein transacylase domain (SAT). The Ketosynthase family 3 (KS3) domain occupies Asn-375 to Asp-806. Active-site for beta-ketoacyl synthase activity residues include Cys-547, His-682, and His-724. Residues Phe-912–Asp-1232 are malonyl-CoA:ACP transacylase (MAT) domain. The active-site For acyl/malonyl transferase activity is Ser-1001. The N-terminal hotdog fold stretch occupies residues His-1286–Ala-1425. In terms of domain architecture, PKS/mFAS DH spans His-1286–Asp-1598. The tract at residues Thr-1290–Pro-1603 is product template (PT) domain. The Proton acceptor; for dehydratase activity role is filled by His-1326. The C-terminal hotdog fold stretch occupies residues Asp-1452 to Asp-1598. The Proton donor; for dehydratase activity role is filled by Asp-1511. A disordered region spans residues Lys-1608–Pro-1643. A compositionally biased stretch (low complexity) spans Pro-1610–Pro-1643. One can recognise a Carrier 1 domain in the interval Pro-1643 to Ser-1720. Ser-1680 bears the O-(pantetheine 4'-phosphoryl)serine mark. The disordered stretch occupies residues Ser-1720–Glu-1765. Positions Ser-1725–Ser-1748 are enriched in low complexity. Residues Ala-1749–Glu-1765 show a composition bias toward polar residues. Residues Val-1764 to Pro-1841 form the Carrier 2 domain. Ser-1801 bears the O-(pantetheine 4'-phosphoryl)serine mark. The tract at residues Ser-1879–Met-2151 is claisen cyclase domain. Ser-1969 (for Claisen cyclase activity) is an active-site residue.

The catalysed reaction is 6 malonyl-CoA + acetyl-CoA + 6 H(+) = naphtopyrone YWA1 + 6 CO2 + 7 CoA + H2O. It participates in secondary metabolite biosynthesis. Functionally, non-reducing polyketide synthase; part of the gene cluster that mediates the biosynthesis of aurasperone B, a dimeric gamma-naphthopyrone. The first step in the biosynthesis of aurasperone B is the production of gamma-naphthopyrone precursor YWA1 by the non-reducing polyketide synthase albA, via condensation of one acetyl-CoA starter unit with 6 malonyl-CoA units. YWA1 is then methylated by aunE at position C-6 to yield foncesin which is further methylated at position C-8 by aunD to produce fonsecin B. A key enzyme in the biosynthetic pathway is the cytochrome P450 monooxygenase aunB which catalyzes the oxidative dimerization of fonsecin B to aurasperone B. AunB also catalyzes the oxidative dimerization of rubrofusarin B into aurasperone A. The chain is Non-reducing polyketide synthase albA from Aspergillus niger (strain ATCC MYA-4892 / CBS 513.88 / FGSC A1513).